The chain runs to 288 residues: Acetyl-coenzyme A carboxylase carboxyl transferase subunit beta (288 aa).

The CoA carboxyltransferase N-terminal domain occupies 34–288 (LFAKCPACKH…HLVAFHGGVS (255 aa)). 4 residues coordinate Zn(2+): cysteine 38, cysteine 41, cysteine 56, and cysteine 59. Residues 38–59 (CPACKHMIYQKDLGPAKICPTC) form a C4-type zinc finger.

Belongs to the AccD/PCCB family. Acetyl-CoA carboxylase is a heterohexamer composed of biotin carboxyl carrier protein (AccB), biotin carboxylase (AccC) and two subunits each of ACCase subunit alpha (AccA) and ACCase subunit beta (AccD). It depends on Zn(2+) as a cofactor.

It localises to the cytoplasm. It carries out the reaction N(6)-carboxybiotinyl-L-lysyl-[protein] + acetyl-CoA = N(6)-biotinyl-L-lysyl-[protein] + malonyl-CoA. The protein operates within lipid metabolism; malonyl-CoA biosynthesis; malonyl-CoA from acetyl-CoA: step 1/1. Functionally, component of the acetyl coenzyme A carboxylase (ACC) complex. Biotin carboxylase (BC) catalyzes the carboxylation of biotin on its carrier protein (BCCP) and then the CO(2) group is transferred by the transcarboxylase to acetyl-CoA to form malonyl-CoA. This Streptococcus equi subsp. zooepidemicus (strain MGCS10565) protein is Acetyl-coenzyme A carboxylase carboxyl transferase subunit beta.